The primary structure comprises 406 residues: Probable tRNA sulfurtransferase (406 aa).

One can recognise a THUMP domain in the interval 60–162 (PEAKARLQDT…PGAALLEVER (103 aa)). ATP-binding positions include 180–181 (LL), 205–206 (HF), arginine 262, glycine 284, and glutamine 293.

It belongs to the ThiI family.

It is found in the cytoplasm. It carries out the reaction [ThiI sulfur-carrier protein]-S-sulfanyl-L-cysteine + a uridine in tRNA + 2 reduced [2Fe-2S]-[ferredoxin] + ATP + H(+) = [ThiI sulfur-carrier protein]-L-cysteine + a 4-thiouridine in tRNA + 2 oxidized [2Fe-2S]-[ferredoxin] + AMP + diphosphate. It catalyses the reaction [ThiS sulfur-carrier protein]-C-terminal Gly-Gly-AMP + S-sulfanyl-L-cysteinyl-[cysteine desulfurase] + AH2 = [ThiS sulfur-carrier protein]-C-terminal-Gly-aminoethanethioate + L-cysteinyl-[cysteine desulfurase] + A + AMP + 2 H(+). Its pathway is cofactor biosynthesis; thiamine diphosphate biosynthesis. Catalyzes the ATP-dependent transfer of a sulfur to tRNA to produce 4-thiouridine in position 8 of tRNAs, which functions as a near-UV photosensor. Also catalyzes the transfer of sulfur to the sulfur carrier protein ThiS, forming ThiS-thiocarboxylate. This is a step in the synthesis of thiazole, in the thiamine biosynthesis pathway. The sulfur is donated as persulfide by IscS. The polypeptide is Probable tRNA sulfurtransferase (Thermus thermophilus (strain ATCC 27634 / DSM 579 / HB8)).